Consider the following 146-residue polypeptide: Interleukin-13 (146 aa).

The N-terminal stretch at 1–24 (MHPLLNPLLLALGLMALLLTTVIA) is a signal peptide. N-linked (GlcNAc...) asparagine glycosylation is found at Asn-52, Asn-63, Asn-71, and Asn-86. 2 disulfides stabilise this stretch: Cys-62–Cys-90 and Cys-78–Cys-104.

This sequence belongs to the IL-4/IL-13 family. Interacts with IL13RA2.

It is found in the secreted. Cytokine that plays important roles in allergic inflammation and immune response to parasite infection. Synergizes with IL2 in regulating interferon-gamma synthesis. Stimulates B-cell proliferation, and activation of eosinophils, basophils, and mast cells. Plays an important role in controlling IL33 activity by modulating the production of transmembrane and soluble forms of interleukin-1 receptor-like 1/IL1RL1. Displays the capacity to antagonize Th1-driven proinflammatory immune response and downregulates synthesis of many proinflammatory cytokines including IL1, IL6, IL10, IL12 and TNF-alpha through a mechanism that partially involves suppression of NF-kappa-B. Also functions on nonhematopoietic cells, including endothelial cells where it induces vascular cell adhesion protein 1/VCAM1, which is important in the recruitment of eosinophils. Exerts its biological effects through its receptors which comprises the IL4R chain and the IL13RA1 chain, to activate JAK1 and TYK2, leading to the activation of STAT6. Aside from IL13RA1, another receptor IL13RA2 acts as a high affinity decoy for IL13 and mediates internalization and depletion of extracellular IL13. The protein is Interleukin-13 (IL13) of Homo sapiens (Human).